Reading from the N-terminus, the 192-residue chain is Protein GrpE (192 aa).

The segment at 1–43 is disordered; the sequence is MQENKQPSEIQGELPQPPDGESVPPQPTNEQAPPDTDTMPRIE.

This sequence belongs to the GrpE family. Homodimer.

Its subcellular location is the cytoplasm. In terms of biological role, participates actively in the response to hyperosmotic and heat shock by preventing the aggregation of stress-denatured proteins, in association with DnaK and GrpE. It is the nucleotide exchange factor for DnaK and may function as a thermosensor. Unfolded proteins bind initially to DnaJ; upon interaction with the DnaJ-bound protein, DnaK hydrolyzes its bound ATP, resulting in the formation of a stable complex. GrpE releases ADP from DnaK; ATP binding to DnaK triggers the release of the substrate protein, thus completing the reaction cycle. Several rounds of ATP-dependent interactions between DnaJ, DnaK and GrpE are required for fully efficient folding. The protein is Protein GrpE of Aromatoleum aromaticum (strain DSM 19018 / LMG 30748 / EbN1) (Azoarcus sp. (strain EbN1)).